Here is a 506-residue protein sequence, read N- to C-terminus: Peptidyl-prolyl cis-trans isomerase CYP59 (506 aa).

The 161-residue stretch at Met-1–Ile-161 folds into the PPIase cyclophilin-type domain. Positions Asn-243–Ser-321 constitute an RRM domain. The CCHC-type zinc finger occupies Gly-341–Gly-357. 2 stretches are compositionally biased toward basic and acidic residues: residues Glu-388–Gln-404 and Gly-412–Arg-506. The segment at Glu-388–Arg-506 is disordered.

It belongs to the cyclophilin-type PPIase family. As to quaternary structure, component of the BZR1 complex. Interacts with NRPB1 (via CTD domain), SCL28, SCL30, SCL30A, SCL33, SC35, SR30, SR34, RSZ21, RS2Z33, RS31 and RS40. As to expression, ubiquitous.

It is found in the nucleus. It carries out the reaction [protein]-peptidylproline (omega=180) = [protein]-peptidylproline (omega=0). Functionally, PPIases accelerate the folding of proteins. It catalyzes the cis-trans isomerization of proline imidic peptide bonds in oligopeptides. Influences somehow regulation of RNA pol II (CTD) phosphorylation. Binds RNA with preferences for GC-rich sequences. Probably involved in activities connecting transcription and pre-mRNA processing. Involved in brassinostroid response. The protein is Peptidyl-prolyl cis-trans isomerase CYP59 (CYP59) of Arabidopsis thaliana (Mouse-ear cress).